Reading from the N-terminus, the 383-residue chain is Dual-specificity RNA methyltransferase RlmN (383 aa).

Catalysis depends on Glu93, which acts as the Proton acceptor. The 241-residue stretch at 99–339 folds into the Radical SAM core domain; the sequence is EETRGTLCVS…TTIRKTRGDD (241 aa). The cysteines at positions 106 and 344 are disulfide-linked. Residues Cys113, Cys117, and Cys120 each coordinate [4Fe-4S] cluster. Residues 170 to 171, Ser202, 224 to 226, and Asn301 contribute to the S-adenosyl-L-methionine site; these read GE and SLH. Cys344 functions as the S-methylcysteine intermediate in the catalytic mechanism.

The protein belongs to the radical SAM superfamily. RlmN family. It depends on [4Fe-4S] cluster as a cofactor.

The protein localises to the cytoplasm. It carries out the reaction adenosine(2503) in 23S rRNA + 2 reduced [2Fe-2S]-[ferredoxin] + 2 S-adenosyl-L-methionine = 2-methyladenosine(2503) in 23S rRNA + 5'-deoxyadenosine + L-methionine + 2 oxidized [2Fe-2S]-[ferredoxin] + S-adenosyl-L-homocysteine. The enzyme catalyses adenosine(37) in tRNA + 2 reduced [2Fe-2S]-[ferredoxin] + 2 S-adenosyl-L-methionine = 2-methyladenosine(37) in tRNA + 5'-deoxyadenosine + L-methionine + 2 oxidized [2Fe-2S]-[ferredoxin] + S-adenosyl-L-homocysteine. In terms of biological role, specifically methylates position 2 of adenine 2503 in 23S rRNA and position 2 of adenine 37 in tRNAs. m2A2503 modification seems to play a crucial role in the proofreading step occurring at the peptidyl transferase center and thus would serve to optimize ribosomal fidelity. The protein is Dual-specificity RNA methyltransferase RlmN of Ralstonia pickettii (strain 12J).